The following is a 293-amino-acid chain: SAGA-associated factor 29 (293 aa).

Residues 3-88 (LVSADSRIAE…KALDKIAEIK (86 aa)) adopt a coiled-coil conformation. The 142-residue stretch at 152 to 293 (GDYVAKPGDK…VVACKEPKKK (142 aa)) folds into the SGF29 C-terminal domain. Histone H3K4me3 N-terminus binding stretches follow at residues 194 to 196 (DID) and 240 to 243 (QTTC). The histone H3K4me3 binding stretch occupies residues 264–266 (FED). Position 288 is an N6-acetyllysine (Lys-288).

The protein belongs to the SGF29 family. Interacts with dimethylated and trimethylated 'Lys-4' of histone H3 (H3K4me2 and H3K4me3), with a preference for the trimethylated form (H3K4me3). Component of some SAGA-type complexes. Component of the ADA2A-containing complex (ATAC), composed of KAT14, KAT2A, TADA2L, TADA3L, ZZ3, MBIP, WDR5, YEATS2, CCDC101 and DR1. Interacts with (methylated) CGAS. Interacts with TADA3L, GCN5L2, SUPT3H and MYC. In terms of tissue distribution, widely expressed with highest levels in testis. Highly expressed in hepatoma and other tumor cell lines.

Its subcellular location is the nucleus. Its function is as follows. Chromatin reader component of some histone acetyltransferase (HAT) SAGA-type complexes like the TFTC-HAT, ATAC or STAGA complexes. SGF29 specifically recognizes and binds methylated 'Lys-4' of histone H3 (H3K4me), with a preference for trimethylated form (H3K4me3). In the SAGA-type complexes, SGF29 is required to recruit complexes to H3K4me. Involved in the response to endoplasmic reticulum (ER) stress by recruiting the SAGA complex to H3K4me, thereby promoting histone H3 acetylation and cell survival. Also binds non-histone proteins that are methylated on Lys residues: specifically recognizes and binds CGAS monomethylated on 'Lys-491'. May be involved in MYC-mediated oncogenic transformation. This Rattus norvegicus (Rat) protein is SAGA-associated factor 29.